A 175-amino-acid polypeptide reads, in one-letter code: Albumin-1 (175 aa).

A disulfide bond links Cys135 and Cys141.

Belongs to the protease inhibitor I3 (leguminous Kunitz-type inhibitor) family.

Functionally, 2S seed storage protein. In Psophocarpus tetragonolobus (Winged bean), this protein is Albumin-1.